Reading from the N-terminus, the 165-residue chain is MRGHEPRSSSSCAACKLLKRRCTPTCIFAPYFRSSDLITFAKVHKVFGASNVSKLLGEVPEEQRQETVNSLAYEAEVRLKDPVYGCIGAIASLQKKMLELQHDLAVARTRLLAHSGVNNSQVSPLDDSPELAAFLDLVPYSDLMLLDGSTNLDAYLYDLGQPPFV.

Residues 10-111 (SSCAACKLLK…HDLAVARTRL (102 aa)) enclose the LOB domain.

This sequence belongs to the LOB domain-containing protein family.

This Arabidopsis thaliana (Mouse-ear cress) protein is LOB domain-containing protein 21 (LBD21).